The following is a 317-amino-acid chain: Trem-like transcript 1 protein (317 aa).

The signal sequence occupies residues 1–20 (MDCYLLLLLLLLGLAGQGSA). The Ig-like V-type domain occupies 21-122 (DSHPEVLQAP…PQTLHRVSLL (102 aa)). Residues 21–175 (DSHPEVLQAP…EFRRRENSIP (155 aa)) are Extracellular-facing. Intrachain disulfides connect C39–C105 and C53–C60. The tract at residues 147–166 (TGSLLEDPSLDPSASAGPHE) is disordered. The helical transmembrane segment at 176 to 196 (LIWGAVLLLALVVVAVVIFAV) threads the bilayer. The Cytoplasmic portion of the chain corresponds to 197 to 317 (MARKKGNRLV…PPNSQTPPSK (121 aa)). The S-palmitoyl cysteine moiety is linked to residue C208. The disordered stretch occupies residues 212 to 278 (QSTGVPGMDP…SQPPLPPKVL (67 aa)). Residues 261–275 (SSEPPAPPSQPPLPP) show a composition bias toward pro residues. Position 283 is a phosphoserine (S283). The short motif at 284-289 (VTYATV) is the ITIM element. A disordered region spans residues 295 to 317 (DKGKIASCEPVQDPPNSQTPPSK). A compositionally biased stretch (polar residues) spans 308–317 (PPNSQTPPSK).

When phosphorylated, interacts with PTPN11. When phosphorylated, interacts with PTPN6. In terms of processing, phosphorylated on tyrosine residues. Highly expressed in bone marrow leukocytes, splenic megakaryocytes and platelets. Detected in brain, liver and in peritoneal monocytes.

The protein resides in the cell membrane. Its subcellular location is the cytoplasm. In terms of biological role, cell surface receptor that may play a role in the innate and adaptive immune response. In Mus musculus (Mouse), this protein is Trem-like transcript 1 protein (Treml1).